Reading from the N-terminus, the 192-residue chain is Large ribosomal subunit protein uL5 (192 aa).

This sequence belongs to the universal ribosomal protein uL5 family. As to quaternary structure, part of the 50S ribosomal subunit; part of the 5S rRNA/L5/L18/L25 subcomplex. Contacts the 5S rRNA and the P site tRNA. Forms a bridge to the 30S subunit in the 70S ribosome.

In terms of biological role, this is one of the proteins that bind and probably mediate the attachment of the 5S RNA into the large ribosomal subunit, where it forms part of the central protuberance. In the 70S ribosome it contacts protein S13 of the 30S subunit (bridge B1b), connecting the 2 subunits; this bridge is implicated in subunit movement. Contacts the P site tRNA; the 5S rRNA and some of its associated proteins might help stabilize positioning of ribosome-bound tRNAs. This is Large ribosomal subunit protein uL5 from Zymomonas mobilis subsp. mobilis (strain ATCC 31821 / ZM4 / CP4).